Consider the following 265-residue polypeptide: 5'-nucleotidase SurE (265 aa).

Residues Asp-12, Asp-13, Ser-43, and Asn-91 each contribute to the a divalent metal cation site.

Belongs to the SurE nucleotidase family. It depends on a divalent metal cation as a cofactor.

The protein localises to the cytoplasm. The catalysed reaction is a ribonucleoside 5'-phosphate + H2O = a ribonucleoside + phosphate. Its function is as follows. Nucleotidase that shows phosphatase activity on nucleoside 5'-monophosphates. The protein is 5'-nucleotidase SurE of Haloquadratum walsbyi (strain DSM 16790 / HBSQ001).